A 399-amino-acid chain; its full sequence is Tyrosine--tRNA ligase (399 aa).

The short motif at 42–51 (PTAPDLHLGH) is the 'HIGH' region element. A 'KMSKS' region motif is present at residues 226–230 (KMSKS). Position 229 (K229) interacts with ATP. Positions 336–396 (MPIAAVLNKA…GRKAFARITL (61 aa)) constitute an S4 RNA-binding domain.

Belongs to the class-I aminoacyl-tRNA synthetase family. TyrS type 2 subfamily. As to quaternary structure, homodimer.

It localises to the cytoplasm. The enzyme catalyses tRNA(Tyr) + L-tyrosine + ATP = L-tyrosyl-tRNA(Tyr) + AMP + diphosphate + H(+). Functionally, catalyzes the attachment of tyrosine to tRNA(Tyr) in a two-step reaction: tyrosine is first activated by ATP to form Tyr-AMP and then transferred to the acceptor end of tRNA(Tyr). This is Tyrosine--tRNA ligase from Pseudomonas fluorescens (strain ATCC BAA-477 / NRRL B-23932 / Pf-5).